Consider the following 549-residue polypeptide: Cation/acetate symporter ActP (549 aa).

Helical transmembrane passes span 33–53, 77–97, 103–123, 148–168, 183–203, 206–226, 262–282, 303–323, 355–375, 404–424, 428–448, 464–484, and 493–513; these read WQAI…TYWA, LAIA…ALVF, GLIY…LIAE, ILSA…QMVG, IAVV…GMLA, WVQI…AFMV, ISAL…PHIL, GFMG…IMLV, LFLG…VAGL, VSKI…VLFE, IAFM…PIIL, GGWL…TIWV, and IFPY…GIWF.

Belongs to the sodium:solute symporter (SSF) (TC 2.A.21) family.

The protein resides in the cell inner membrane. Functionally, transports acetate. The chain is Cation/acetate symporter ActP from Salmonella arizonae (strain ATCC BAA-731 / CDC346-86 / RSK2980).